Here is a 290-residue protein sequence, read N- to C-terminus: Thymidylate synthase (290 aa).

DUMP is bound at residue arginine 31. (6R)-5,10-methylene-5,6,7,8-tetrahydrofolate is bound at residue histidine 61. 152–153 serves as a coordination point for dUMP; it reads RR. The active-site Nucleophile is cysteine 172. Residues 192-195, asparagine 203, and 233-235 each bind dUMP; these read RSAD and HIY. Aspartate 195 lines the (6R)-5,10-methylene-5,6,7,8-tetrahydrofolate pocket. Position 289 (alanine 289) interacts with (6R)-5,10-methylene-5,6,7,8-tetrahydrofolate.

It belongs to the thymidylate synthase family. Bacterial-type ThyA subfamily. Homodimer.

Its subcellular location is the cytoplasm. It carries out the reaction dUMP + (6R)-5,10-methylene-5,6,7,8-tetrahydrofolate = 7,8-dihydrofolate + dTMP. Its pathway is pyrimidine metabolism; dTTP biosynthesis. In terms of biological role, catalyzes the reductive methylation of 2'-deoxyuridine-5'-monophosphate (dUMP) to 2'-deoxythymidine-5'-monophosphate (dTMP) while utilizing 5,10-methylenetetrahydrofolate (mTHF) as the methyl donor and reductant in the reaction, yielding dihydrofolate (DHF) as a by-product. This enzymatic reaction provides an intracellular de novo source of dTMP, an essential precursor for DNA biosynthesis. In Psychrobacter cryohalolentis (strain ATCC BAA-1226 / DSM 17306 / VKM B-2378 / K5), this protein is Thymidylate synthase.